Consider the following 146-residue polypeptide: CysO-cysteine peptidase (146 aa).

Residues 11-134 (LVIRADLVNA…LRSYRIVDGA (124 aa)) form the MPN domain. H88, H90, and D101 together coordinate Zn(2+). The JAMM motif motif lies at 88-101 (HSHTATEAYPSRTD).

It belongs to the peptidase M67A family. Requires Zn(2+) as cofactor.

The catalysed reaction is [CysO sulfur-carrier protein]-Gly-NH-CH2-C(O)-S-L-Cys + H2O = [CysO sulfur-carrier protein]-C-terminal Gly-Gly + L-cysteine + H(+). Its pathway is amino-acid biosynthesis; L-cysteine biosynthesis. Its function is as follows. Protease that hydrolyzes the covalent CysO-cysteine adduct synthesized by CysM to release L-cysteine and regenerate CysO. The polypeptide is CysO-cysteine peptidase (mec) (Mycobacterium bovis (strain ATCC BAA-935 / AF2122/97)).